The primary structure comprises 493 residues: Glutamate--tRNA ligase (493 aa).

Residues 9-19 (PSPTGFVHIGS) carry the 'HIGH' region motif. The 'KMSKS' region signature appears at 258-262 (KLSKR). Lysine 261 provides a ligand contact to ATP.

It belongs to the class-I aminoacyl-tRNA synthetase family. Glutamate--tRNA ligase type 1 subfamily. Monomer.

It localises to the cytoplasm. The enzyme catalyses tRNA(Glu) + L-glutamate + ATP = L-glutamyl-tRNA(Glu) + AMP + diphosphate. In terms of biological role, catalyzes the attachment of glutamate to tRNA(Glu) in a two-step reaction: glutamate is first activated by ATP to form Glu-AMP and then transferred to the acceptor end of tRNA(Glu). The sequence is that of Glutamate--tRNA ligase from Clostridioides difficile (strain 630) (Peptoclostridium difficile).